The sequence spans 775 residues: E3 ubiquitin-protein ligase UHRF1 (775 aa).

Residues 1–77 (MWIQVRTMDG…IVQLLVRQIP (77 aa)) form the Ubiquitin-like domain. Residues 81-128 (PTKDKECGISDADSGCGSGQGESDKNSSCGEGATDVDGQPAGINSENV) are disordered. 2 tudor-like regions span residues 131–207 (SLYK…LRAR) and 214–283 (DLKV…IEEP). A linker region spans residues 293–301 (PQKRQNGPE). The segment at 299–366 (GPECKHCKDN…DWYCPDCRND (68 aa)) adopts a PHD-type zinc-finger fold. Histone H3R2me0 binding regions lie at residues 333-337 (CDECD) and 353-355 (PQD). Residues 419–582 (GPIPGVPVGT…FLVWRYLLRR (164 aa)) enclose the YDG domain. The interval 445–446 (HV) is required to promote base flipping. Residues 463-464 (AG) and Asp-469 each bind DNA. Required for formation of a 5-methylcytosine-binding pocket regions lie at residues 466–469 (YEDD) and 478–481 (YTGS). Residues 616 to 628 (ASKEREKENKTED) are compositionally biased toward basic and acidic residues. Residues 616–655 (ASKEREKENKTEDELSESPSKGKRKRNSAGSGLSDAKSTP) are disordered. The RING-type zinc-finger motif lies at 706-745 (CICCQEVVYEPITTECHHNICKGCLDRSFKALVHNCPACR).

The protein resides in the nucleus. The enzyme catalyses S-ubiquitinyl-[E2 ubiquitin-conjugating enzyme]-L-cysteine + [acceptor protein]-L-lysine = [E2 ubiquitin-conjugating enzyme]-L-cysteine + N(6)-ubiquitinyl-[acceptor protein]-L-lysine.. The protein operates within protein modification; protein ubiquitination. Functionally, multidomain protein that acts as a key epigenetic regulator by bridging DNA methylation and chromatin modification. Specifically recognizes and binds hemimethylated DNA at replication forks via its YDG domain and recruits dnmt1 methyltransferase to ensure faithful propagation of the DNA methylation patterns through DNA replication. In addition to its role in maintenance of DNA methylation, also plays a key role in chromatin modification: through its tudor-like regions and PHD-type zinc fingers, specifically recognizes and binds histone H3 trimethylated at 'Lys-9' (H3K9me3) and unmethylated at 'Arg-2' (H3R2me0), respectively, and recruits chromatin proteins. Enriched in pericentric heterochromatin where it recruits different chromatin modifiers required for this chromatin replication. Also localizes to euchromatic regions where it negatively regulates transcription possibly by impacting DNA methylation and histone modifications. Has E3 ubiquitin-protein ligase activity by mediating the ubiquitination of target proteins. However, it is still unclear how E3 ubiquitin-protein ligase activity is related to its role in chromatin in vivo. The chain is E3 ubiquitin-protein ligase UHRF1 (uhrf1) from Xenopus tropicalis (Western clawed frog).